Here is an 84-residue protein sequence, read N- to C-terminus: ATP synthase subunit c (84 aa).

Helical transmembrane passes span isoleucine 10–leucine 30 and phenylalanine 53–phenylalanine 73.

Belongs to the ATPase C chain family. F-type ATPases have 2 components, F(1) - the catalytic core - and F(0) - the membrane proton channel. F(1) has five subunits: alpha(3), beta(3), gamma(1), delta(1), epsilon(1). F(0) has three main subunits: a(1), b(2) and c(10-14). The alpha and beta chains form an alternating ring which encloses part of the gamma chain. F(1) is attached to F(0) by a central stalk formed by the gamma and epsilon chains, while a peripheral stalk is formed by the delta and b chains.

Its subcellular location is the cell inner membrane. Functionally, f(1)F(0) ATP synthase produces ATP from ADP in the presence of a proton or sodium gradient. F-type ATPases consist of two structural domains, F(1) containing the extramembraneous catalytic core and F(0) containing the membrane proton channel, linked together by a central stalk and a peripheral stalk. During catalysis, ATP synthesis in the catalytic domain of F(1) is coupled via a rotary mechanism of the central stalk subunits to proton translocation. Key component of the F(0) channel; it plays a direct role in translocation across the membrane. A homomeric c-ring of between 10-14 subunits forms the central stalk rotor element with the F(1) delta and epsilon subunits. This is ATP synthase subunit c from Shewanella putrefaciens (strain CN-32 / ATCC BAA-453).